Reading from the N-terminus, the 103-residue chain is Large ribosomal subunit protein uL23 (103 aa).

It belongs to the universal ribosomal protein uL23 family. In terms of assembly, part of the 50S ribosomal subunit. Contacts protein L29, and trigger factor when it is bound to the ribosome.

One of the early assembly proteins it binds 23S rRNA. One of the proteins that surrounds the polypeptide exit tunnel on the outside of the ribosome. Forms the main docking site for trigger factor binding to the ribosome. This chain is Large ribosomal subunit protein uL23, found in Chlorobaculum tepidum (strain ATCC 49652 / DSM 12025 / NBRC 103806 / TLS) (Chlorobium tepidum).